Consider the following 341-residue polypeptide: Glyceraldehyde-3-phosphate dehydrogenase, cytosolic (341 aa).

Residues arginine 15–isoleucine 16, aspartate 37, and arginine 84 contribute to the NAD(+) site. Residues serine 155–threonine 157, threonine 186, threonine 215–glycine 216, and arginine 238 each bind D-glyceraldehyde 3-phosphate. Cysteine 156 acts as the Nucleophile in catalysis. Asparagine 320 provides a ligand contact to NAD(+).

The protein belongs to the glyceraldehyde-3-phosphate dehydrogenase family. Homotetramer.

The protein resides in the cytoplasm. The catalysed reaction is D-glyceraldehyde 3-phosphate + phosphate + NAD(+) = (2R)-3-phospho-glyceroyl phosphate + NADH + H(+). The protein operates within carbohydrate degradation; glycolysis; pyruvate from D-glyceraldehyde 3-phosphate: step 1/5. Its function is as follows. Key enzyme in glycolysis that catalyzes the first step of the pathway by converting D-glyceraldehyde 3-phosphate (G3P) into 3-phospho-D-glyceroyl phosphate. Essential for the maintenance of cellular ATP levels and carbohydrate metabolism. This Magnolia liliiflora (Mulan magnolia) protein is Glyceraldehyde-3-phosphate dehydrogenase, cytosolic (GAPC).